Reading from the N-terminus, the 490-residue chain is Betaine aldehyde dehydrogenase (490 aa).

The K(+) site is built by Ile27 and Asp93. 150–152 (GAW) serves as a coordination point for NAD(+). The active-site Charge relay system is Lys162. Residue 176 to 179 (KPSE) participates in NAD(+) binding. A K(+)-binding site is contributed by Val180. 230 to 233 (GTTT) is a binding site for NAD(+). Leu246 contributes to the K(+) binding site. Glu252 serves as the catalytic Proton acceptor. NAD(+)-binding residues include Gly254, Cys286, and Glu387. Cys286 serves as the catalytic Nucleophile. Cys286 is subject to Cysteine sulfenic acid (-SOH). K(+) contacts are provided by Lys457 and Gly460. Glu464 serves as the catalytic Charge relay system.

This sequence belongs to the aldehyde dehydrogenase family. In terms of assembly, dimer of dimers. Requires K(+) as cofactor.

The catalysed reaction is betaine aldehyde + NAD(+) + H2O = glycine betaine + NADH + 2 H(+). Its pathway is amine and polyamine biosynthesis; betaine biosynthesis via choline pathway; betaine from betaine aldehyde: step 1/1. In terms of biological role, involved in the biosynthesis of the osmoprotectant glycine betaine. Catalyzes the irreversible oxidation of betaine aldehyde to the corresponding acid. In Pseudomonas putida (strain ATCC 700007 / DSM 6899 / JCM 31910 / BCRC 17059 / LMG 24140 / F1), this protein is Betaine aldehyde dehydrogenase.